A 435-amino-acid polypeptide reads, in one-letter code: Tumor necrosis factor receptor superfamily member 3 (435 aa).

Positions 1–30 are cleaved as a signal peptide; it reads MLLPWATSAPGLAWGPLVLGLFGLLAASQP. Topologically, residues 31 to 227 are extracellular; it reads QAVPPYASEN…PPEMSGTMLM (197 aa). N-linked (GlcNAc...) asparagine glycosylation occurs at N40. 4 TNFR-Cys repeats span residues 42-81, 82-124, 125-168, and 169-211; these read TCRDQEKEYYEPQHRICCSRCPPGTYVSAKCSRIRDTVCA, TCAE…KTQC, RCQP…NHCV, and PCKA…TTCK. Cystine bridges form between C43-C58, C59-C72, C62-C80, C83-C98, C101-C116, C104-C124, C126-C132, C139-C148, C142-C167, and C170-C185. N177 carries N-linked (GlcNAc...) asparagine glycosylation. Residues 228–248 form a helical membrane-spanning segment; that stretch reads LAVLLPLAFFLLLATVFSCIW. Residues 249–435 lie on the Cytoplasmic side of the membrane; it reads KSHPSLCRKL…GPRNQFITHD (187 aa). Position 323 is a phosphoserine (S323). Pro residues predominate over residues 373 to 399; that stretch reads PGPGDLPATPEPPYPIPEEGDPGPPGL. Residues 373–435 form a disordered region; that stretch reads PGPGDLPATP…GPRNQFITHD (63 aa). Residues 403 to 417 show a composition bias toward basic and acidic residues; sequence HQEDGKAWHLAETEH. Residues 421–435 show a composition bias toward polar residues; the sequence is TPSNRGPRNQFITHD.

Self-associates; dimerization and trimerization are promoted by lymphotoxin (LTA(1)-LTB(2)). Associates with TRAF3. Associates with TRAF4. Associates with TRAF5. Interacts with Aedes aegypti lymphotoxin beta receptor inhibitor; the interaction reduces dimerization and trimerization of LTBR induced by lymphotoxin (LTA(1)-LTB(2)). As to quaternary structure, (Microbial infection) Interacts with HCV core protein.

The protein localises to the membrane. Functionally, receptor for the heterotrimeric lymphotoxin containing LTA and LTB, and for TNFS14/LIGHT. Activates NF-kappa-B signaling pathway upon stimulation with lymphotoxin (LTA(1)-LTB(2)). Promotes apoptosis via TRAF3 and TRAF5. May play a role in the development of lymphoid organs. The protein is Tumor necrosis factor receptor superfamily member 3 (LTBR) of Homo sapiens (Human).